Consider the following 531-residue polypeptide: Importin subunit alpha-3 (531 aa).

Positions 1–58 constitute an IBB domain; the sequence is MSLRPSAKTEVRRNRYKVAVDAEEGRRRREDNLVEIRKNKREENLQKKRFTSSMAFGS. ARM repeat units follow at residues 111-153, 154-198, 199-236, 237-281, 282-321, 322-364, 365-405, and 406-447; these read INEV…TSEN, TNVI…CRDL, VLSYGAMTPLLSQFNENTKLSMLRNATWTLSNFCRGKP, PPAF…DKIQ, AVIEAGVVPRLIQLLGHSSPSVLIPALRTIGNIVTGDDLQ, TQMV…NADQ, IQAV…GGTH, and DQIK…VVGE. The interval 500 to 524 is disordered; the sequence is DNEEEGNDENHAPQSGFQFGSTNVP. The segment covering 511 to 524 has biased composition (polar residues); it reads APQSGFQFGSTNVP.

Belongs to the importin alpha family. As to quaternary structure, forms a complex with importin subunit beta-1. Interacts with PRL1. Interacts with A.tumefaciens VirD2 and VirE2.

The protein resides in the nucleus. Functionally, binds to conventional NLS motifs and mediates nuclear protein import across the nuclear envelope. Acts as a cellular receptor for the nuclear import of the virD2 protein of Agrobacterium, but is not essential for Agrobacterium-mediated root transformation. May be involved in the regulation of pathogen-induced salicylic acid accumulation. This chain is Importin subunit alpha-3, found in Arabidopsis thaliana (Mouse-ear cress).